Here is a 284-residue protein sequence, read N- to C-terminus: Pantothenate synthetase (284 aa).

30-37 (MGNLHDGH) contacts ATP. His-37 (proton donor) is an active-site residue. A (R)-pantoate-binding site is contributed by Gln-61. Gln-61 contacts beta-alanine. 149-152 (GEKD) is an ATP binding site. (R)-pantoate is bound at residue Gln-155. ATP-binding positions include Val-178 and 186-189 (LSSR).

This sequence belongs to the pantothenate synthetase family. As to quaternary structure, homodimer.

The protein localises to the cytoplasm. The catalysed reaction is (R)-pantoate + beta-alanine + ATP = (R)-pantothenate + AMP + diphosphate + H(+). The protein operates within cofactor biosynthesis; (R)-pantothenate biosynthesis; (R)-pantothenate from (R)-pantoate and beta-alanine: step 1/1. In terms of biological role, catalyzes the condensation of pantoate with beta-alanine in an ATP-dependent reaction via a pantoyl-adenylate intermediate. This is Pantothenate synthetase from Enterobacter sp. (strain 638).